Reading from the N-terminus, the 101-residue chain is Small ribosomal subunit protein uS14 (101 aa).

It belongs to the universal ribosomal protein uS14 family. In terms of assembly, part of the 30S ribosomal subunit. Contacts proteins S3 and S10.

Functionally, binds 16S rRNA, required for the assembly of 30S particles and may also be responsible for determining the conformation of the 16S rRNA at the A site. The sequence is that of Small ribosomal subunit protein uS14 from Shewanella frigidimarina (strain NCIMB 400).